Here is a 697-residue protein sequence, read N- to C-terminus: Histone deacetylase HOS3 (697 aa).

The segment at 40-440 (AKAVVVLSPY…LIGLQNQDWV (401 aa)) is histone deacetylase. Histidine 196 is an active-site residue. The segment at 525–573 (IRSHRSNASPEKELHENKPRSTEKQEQREIRSDTKVKQLSSNNRAAETQ) is disordered. Basic and acidic residues predominate over residues 534–560 (PEKELHENKPRSTEKQEQREIRSDTKV). Over residues 561 to 573 (KQLSSNNRAAETQ) the composition is skewed to polar residues. A phosphoserine mark is found at serine 582, serine 583, serine 613, and serine 629. Basic and acidic residues predominate over residues 625 to 638 (GDEDSDHELKEKNW). The disordered stretch occupies residues 625–697 (GDEDSDHELK…KHTTRSGGRW (73 aa)). Positions 665–674 (QPQNANTPTY) are enriched in polar residues.

Belongs to the histone deacetylase family. HD type 1 subfamily. Homodimer.

It localises to the nucleus. The catalysed reaction is N(6)-acetyl-L-lysyl-[histone] + H2O = L-lysyl-[histone] + acetate. Its function is as follows. Responsible for the deacetylation of lysine residues on the N-terminal part of the core histones (H2A, H2B, H3 and H4). Histone deacetylation gives a tag for epigenetic repression and plays an important role in transcriptional regulation, cell cycle progression and developmental events. Histone deacetylases act via the formation of large multiprotein complexes. In Saccharomyces cerevisiae (strain ATCC 204508 / S288c) (Baker's yeast), this protein is Histone deacetylase HOS3 (HOS3).